Reading from the N-terminus, the 71-residue chain is DNA-directed RNA polymerase subunit epsilon (71 aa).

This sequence belongs to the RNA polymerase subunit epsilon family. In terms of assembly, RNAP is composed of a core of 2 alpha, a beta and a beta' subunit. The core is associated with a delta subunit, and at least one of epsilon or omega. When a sigma factor is associated with the core the holoenzyme is formed, which can initiate transcription.

The catalysed reaction is RNA(n) + a ribonucleoside 5'-triphosphate = RNA(n+1) + diphosphate. Functionally, a non-essential component of RNA polymerase (RNAP). In Geobacillus thermodenitrificans (strain NG80-2), this protein is DNA-directed RNA polymerase subunit epsilon.